A 733-amino-acid chain; its full sequence is Nuclear hormone receptor family member nhr-66 (733 aa).

Composition is skewed to low complexity over residues P113 to S130 and Q165 to N185. The disordered stretch occupies residues P113 to K190. Residues V266 to H343 constitute a DNA-binding region (nuclear receptor). 2 consecutive NR C4-type zinc fingers follow at residues C269–C289 and C305–C326. The segment at P361–G396 is disordered. Over residues V371–G382 the composition is skewed to low complexity. Residues C444–E687 enclose the NR LBD domain. Positions A676–E687 are AF-2. A disordered region spans residues V691 to L733.

The protein belongs to the nuclear hormone receptor family. As to quaternary structure, interacts with nuclear hormone receptor nhr-49; the interaction is direct. Widely expressed, including in hypodermis, gut, muscle, and neuronal cells of the ventral nerve cord, head, and tail ganglia. Expressed in the head ganglion in several sensory and interneurons, including AVA.

The protein localises to the nucleus. In terms of biological role, transcription factor. Binds to regulatory elements and regulates transcription of target genes, including the potassium channel accessory subunit mps-2. Negatively regulates transcription of mps-2, thereby modulating age-dependent memory decline. In concert with nuclear hormone receptor nhr-49, involved in regulating target genes with roles in sphingolipid breakdown and lipid remodeling. Plays a role in modulating mitochondrial morphology and function. The chain is Nuclear hormone receptor family member nhr-66 from Caenorhabditis elegans.